The chain runs to 254 residues: L-rhamnose 1-dehydrogenase (NAD(P)(+)) (254 aa).

The NADP(+) site is built by G13, S15, I18, D64, V65, and N91. The active-site Proton donor is S144. Beta-L-rhamnose-binding residues include S144, S146, Q154, and Y157. 2 residues coordinate NADP(+): Y157 and K161. Y157 acts as the Proton acceptor in catalysis. The active-site Lowers pKa of active site Tyr is K161. T189 contributes to the beta-L-rhamnose binding site. I190 contacts NADP(+). Position 195 (N195) interacts with beta-L-rhamnose.

Belongs to the short-chain dehydrogenases/reductases (SDR) family.

The enzyme catalyses L-rhamnofuranose + NAD(+) = L-rhamnono-1,4-lactone + NADH + H(+). The catalysed reaction is L-rhamnofuranose + NADP(+) = L-rhamnono-1,4-lactone + NADPH + H(+). It participates in carbohydrate degradation; L-rhamnose degradation. In terms of biological role, NAD(P)-dependent dehydrogenase that catalyzes the oxidation of L-rhamnose to L-rhamnono-1,4-lactone. Also shows high activity with L-lyxose and low activity with L-mannose. Can utilize either NAD(+) or NADP(+), with a slight preference for NADP(+). Catalyzes the first step in an alternative pathway for rhamnose utilization that does not involve phosphorylated intermediates. In Sphingomonas sp. (strain SKA58), this protein is L-rhamnose 1-dehydrogenase (NAD(P)(+)).